A 180-amino-acid chain; its full sequence is MSQFLSLRNCLRLTIRLLRQFRRGEGMKAVIIMGSKSDLDYSKKIASKLADFGIDAVMRIASAHKTPEKVLEIIKEYEKEDVVFVTVAGRSNALSGFVDANTSKPVIASPPYSDKFGGADIFSSIRMPSGVAPMLVLEAENAALAVAKIFALKDEGVREKVVQFQENKRREIYKADEELR.

Substrate-binding residues include Ser-35, Asp-38, Ser-62, Lys-65, Gly-89, and Ser-91.

Belongs to the AIR carboxylase family. Class II subfamily.

The catalysed reaction is 5-amino-1-(5-phospho-D-ribosyl)imidazole-4-carboxylate + H(+) = 5-amino-1-(5-phospho-beta-D-ribosyl)imidazole + CO2. It functions in the pathway purine metabolism; IMP biosynthesis via de novo pathway; 5-amino-1-(5-phospho-D-ribosyl)imidazole-4-carboxylate from 5-amino-1-(5-phospho-D-ribosyl)imidazole (carboxylase route): step 1/1. Catalyzes the reversible conversion of 5-aminoimidazole ribonucleotide (AIR) and CO(2) to 4-carboxy-5-aminoimidazole ribonucleotide (CAIR). This Archaeoglobus fulgidus (strain ATCC 49558 / DSM 4304 / JCM 9628 / NBRC 100126 / VC-16) protein is Phosphoribosylaminoimidazole carboxylase.